Consider the following 297-residue polypeptide: Ribosomal RNA small subunit methyltransferase A (297 aa).

N31, L33, G58, E79, D104, and N129 together coordinate S-adenosyl-L-methionine.

Belongs to the class I-like SAM-binding methyltransferase superfamily. rRNA adenine N(6)-methyltransferase family. RsmA subfamily.

It localises to the cytoplasm. The catalysed reaction is adenosine(1518)/adenosine(1519) in 16S rRNA + 4 S-adenosyl-L-methionine = N(6)-dimethyladenosine(1518)/N(6)-dimethyladenosine(1519) in 16S rRNA + 4 S-adenosyl-L-homocysteine + 4 H(+). Functionally, specifically dimethylates two adjacent adenosines (A1518 and A1519) in the loop of a conserved hairpin near the 3'-end of 16S rRNA in the 30S particle. May play a critical role in biogenesis of 30S subunits. The protein is Ribosomal RNA small subunit methyltransferase A of Staphylococcus aureus (strain Newman).